A 1052-amino-acid polypeptide reads, in one-letter code: F-box/WD repeat-containing protein 10 (1052 aa).

The stretch at 169 to 206 is one WD 1 repeat; that stretch reads GLNQDITDVCFSPEKDHSSKSATSQVYWTAKTQHTSLP. An F-box domain is found at 276 to 323; the sequence is DFIRYLPIHLSKYILRMLDRHTLNKCASVSQHWAAMAQQVKMDLSAHG. WD repeat units lie at residues 409–447, 451–490, 493–532, 534–569, 572–609, and 611–652; these read SDTW…AIPV, GHAG…CTRI, GHQG…KTFR, KDPI…LVKT, GHEG…ERCL, and AFKH…KVLK. Residues 690–719 adopt a coiled-coil conformation; that stretch reads YAVEKTKQKKNKEKEEEKEENSLMEILSKC. Positions 766-805 are disordered; the sequence is LQSQGKSKSPRRDADDVEKAQKQGQLETPGKLPSHPKKKS. The span at 775–786 shows a compositional bias: basic and acidic residues; sequence PRRDADDVEKAQ. Residues 986-1010 are a coiled coil; that stretch reads VLLTVKEEKEHQEAKMKEYQAREST.

Probable substrate-recognition component of a SCF (SKP1-CUL1-F-box protein)-type E3 ubiquitin ligase complex which mediates the ubiquitination and subsequent proteasomal degradation of target proteins. Overexpression is leading to degradation of CBX5 and CBX1. This Homo sapiens (Human) protein is F-box/WD repeat-containing protein 10 (FBXW10).